A 232-amino-acid chain; its full sequence is Large ribosomal subunit protein uL1 (232 aa).

Belongs to the universal ribosomal protein uL1 family. As to quaternary structure, part of the 50S ribosomal subunit.

In terms of biological role, binds directly to 23S rRNA. The L1 stalk is quite mobile in the ribosome, and is involved in E site tRNA release. Functionally, protein L1 is also a translational repressor protein, it controls the translation of the L11 operon by binding to its mRNA. This chain is Large ribosomal subunit protein uL1, found in Cereibacter sphaeroides (strain ATCC 17029 / ATH 2.4.9) (Rhodobacter sphaeroides).